Consider the following 85-residue polypeptide: Large ribosomal subunit protein bL27 (85 aa).

Positions 1–24 (MAHKKAGGSSRNGRDSHSKRLGVK) are disordered.

Belongs to the bacterial ribosomal protein bL27 family.

This is Large ribosomal subunit protein bL27 from Nitrosomonas eutropha (strain DSM 101675 / C91 / Nm57).